The sequence spans 721 residues: Fatty acid oxidation complex subunit alpha (721 aa).

The interval 1–190 (MIYEGKAITV…KVGAVDAVVA (190 aa)) is enoyl-CoA hydratase/isomerase. Residue D297 coordinates substrate. Residues 312-721 (KDVKQAAVLG…SFFGQASSEE (410 aa)) are 3-hydroxyacyl-CoA dehydrogenase. NAD(+) contacts are provided by residues M325, D344, 401 to 403 (VVE), K408, and S430. H451 functions as the For 3-hydroxyacyl-CoA dehydrogenase activity in the catalytic mechanism. Residue N454 coordinates NAD(+). Substrate contacts are provided by N501 and Y660.

The protein in the N-terminal section; belongs to the enoyl-CoA hydratase/isomerase family. It in the C-terminal section; belongs to the 3-hydroxyacyl-CoA dehydrogenase family. As to quaternary structure, heterotetramer of two alpha chains (FadB) and two beta chains (FadA).

The enzyme catalyses a (3S)-3-hydroxyacyl-CoA + NAD(+) = a 3-oxoacyl-CoA + NADH + H(+). It carries out the reaction a (3S)-3-hydroxyacyl-CoA = a (2E)-enoyl-CoA + H2O. It catalyses the reaction a 4-saturated-(3S)-3-hydroxyacyl-CoA = a (3E)-enoyl-CoA + H2O. The catalysed reaction is (3S)-3-hydroxybutanoyl-CoA = (3R)-3-hydroxybutanoyl-CoA. The enzyme catalyses a (3Z)-enoyl-CoA = a 4-saturated (2E)-enoyl-CoA. It carries out the reaction a (3E)-enoyl-CoA = a 4-saturated (2E)-enoyl-CoA. The protein operates within lipid metabolism; fatty acid beta-oxidation. In terms of biological role, involved in the aerobic and anaerobic degradation of long-chain fatty acids via beta-oxidation cycle. Catalyzes the formation of 3-oxoacyl-CoA from enoyl-CoA via L-3-hydroxyacyl-CoA. It can also use D-3-hydroxyacyl-CoA and cis-3-enoyl-CoA as substrate. The polypeptide is Fatty acid oxidation complex subunit alpha (Pseudomonas syringae pv. syringae (strain B728a)).